Here is a 192-residue protein sequence, read N- to C-terminus: ADP-ribose glycohydrolase AF_1521 (192 aa).

The 192-residue stretch at 1–192 folds into the Macro domain; sequence MEVLFEAKVG…VALKVFERSL (192 aa). Substrate contacts are provided by residues 19–21, 32–34, 39–44, and 140–146; these read GDI, AAN, HGGGVA, and VSAGIYG.

It catalyses the reaction 5-O-(ADP-D-ribosyl)-L-glutamyl-[protein] + H2O = L-glutamyl-[protein] + ADP-D-ribose + H(+). It carries out the reaction 4-O-(ADP-D-ribosyl)-L-aspartyl-[protein] + H2O = L-aspartyl-[protein] + ADP-D-ribose + H(+). The enzyme catalyses alpha-NAD(+) + H2O = ADP-D-ribose + nicotinamide + H(+). Functionally, removes ADP-ribose from aspartate and glutamate residues in proteins bearing a single ADP-ribose moiety. Inactive towards proteins bearing poly-ADP-ribose. Catalyzes removal of a phosphate group from ADP-ribose 1''-phosphate (Appr1p), but with low efficiency. In Archaeoglobus fulgidus (strain ATCC 49558 / DSM 4304 / JCM 9628 / NBRC 100126 / VC-16), this protein is ADP-ribose glycohydrolase AF_1521.